The primary structure comprises 384 residues: MAPKKSKKSKKEESMIDFVEEEVTGDVDEDGFEQAEDMPDEVDSDEDEPPKKKKKVVKKEIKQELELTDEKLQELLEKYEASKATATKTKDDFKHLPKSQRGKALKRALRKDKRARQGERAQIRDELGESAPQKEVPKTIESMREYDATMVNEEDDEVEHDEANDEFAPYFNRETSPKVMITMTPKAKITTFKFCFELQKCIPNSEIFTRKNVLLKTIIEQAKEREFTDLLVVHEDRKKPNGIIFCHLPEGPTAYFKINSLTFTQDLKKFGESTSHFPEVILNNFNTRLGHNIARMLACLFPHDPKFTGRRVVTFHNQRDYIFFRHHRYEFKKEGSKAALLELGPRFTLRLKWLQKGTFDAKWGEFEWVLKRHEMETSRRRFFL.

2 disordered regions span residues 1–58 (MAPK…KVVK) and 82–135 (SKAT…PQKE). Acidic residues predominate over residues 18-48 (FVEEEVTGDVDEDGFEQAEDMPDEVDSDEDE). The span at 96–114 (LPKSQRGKALKRALRKDKR) shows a compositional bias: basic residues. Residues 115-127 (ARQGERAQIRDEL) are compositionally biased toward basic and acidic residues. A Brix domain is found at 177 to 360 (PKVMITMTPK…LKWLQKGTFD (184 aa)).

The sequence is that of Brix domain-containing protein F44G4.1 from Caenorhabditis elegans.